Consider the following 417-residue polypeptide: Nuclear envelope integral membrane protein 2 (417 aa).

The first 24 residues, 1-24 (MGPRQGRWWLLLWLPPLATLPVRG), serve as a signal peptide directing secretion. The next 5 membrane-spanning stretches (helical) occupy residues 148-168 (NIMD…FFYA), 177-197 (FYYS…VLLL), 207-227 (TFWA…CQLM), 239-259 (IYVL…CYKH), and 280-300 (LVLV…IILL).

Belongs to the NEMP family.

It is found in the nucleus inner membrane. The polypeptide is Nuclear envelope integral membrane protein 2 (NEMP2) (Homo sapiens (Human)).